We begin with the raw amino-acid sequence, 252 residues long: Hydroxyacylglutathione hydrolase (252 aa).

Histidine 54, histidine 56, aspartate 58, histidine 59, histidine 111, aspartate 128, and histidine 166 together coordinate Zn(2+).

The protein belongs to the metallo-beta-lactamase superfamily. Glyoxalase II family. In terms of assembly, monomer. Zn(2+) is required as a cofactor.

It catalyses the reaction an S-(2-hydroxyacyl)glutathione + H2O = a 2-hydroxy carboxylate + glutathione + H(+). Its pathway is secondary metabolite metabolism; methylglyoxal degradation; (R)-lactate from methylglyoxal: step 2/2. Functionally, thiolesterase that catalyzes the hydrolysis of S-D-lactoyl-glutathione to form glutathione and D-lactic acid. The polypeptide is Hydroxyacylglutathione hydrolase (Vibrio vulnificus (strain CMCP6)).